Here is a 219-residue protein sequence, read N- to C-terminus: Thiamine-phosphate synthase (219 aa).

Residues 45–49 and Asn77 each bind 4-amino-2-methyl-5-(diphosphooxymethyl)pyrimidine; that span reads QYREK. Mg(2+) contacts are provided by Asp78 and Asp97. Residue Thr116 coordinates 4-amino-2-methyl-5-(diphosphooxymethyl)pyrimidine. Residue 142 to 144 participates in 2-[(2R,5Z)-2-carboxy-4-methylthiazol-5(2H)-ylidene]ethyl phosphate binding; that stretch reads SFT. Lys145 contacts 4-amino-2-methyl-5-(diphosphooxymethyl)pyrimidine. Residues Gly173 and 193-194 each bind 2-[(2R,5Z)-2-carboxy-4-methylthiazol-5(2H)-ylidene]ethyl phosphate; that span reads VT.

This sequence belongs to the thiamine-phosphate synthase family. The cofactor is Mg(2+).

It catalyses the reaction 2-[(2R,5Z)-2-carboxy-4-methylthiazol-5(2H)-ylidene]ethyl phosphate + 4-amino-2-methyl-5-(diphosphooxymethyl)pyrimidine + 2 H(+) = thiamine phosphate + CO2 + diphosphate. The catalysed reaction is 2-(2-carboxy-4-methylthiazol-5-yl)ethyl phosphate + 4-amino-2-methyl-5-(diphosphooxymethyl)pyrimidine + 2 H(+) = thiamine phosphate + CO2 + diphosphate. The enzyme catalyses 4-methyl-5-(2-phosphooxyethyl)-thiazole + 4-amino-2-methyl-5-(diphosphooxymethyl)pyrimidine + H(+) = thiamine phosphate + diphosphate. It functions in the pathway cofactor biosynthesis; thiamine diphosphate biosynthesis; thiamine phosphate from 4-amino-2-methyl-5-diphosphomethylpyrimidine and 4-methyl-5-(2-phosphoethyl)-thiazole: step 1/1. Condenses 4-methyl-5-(beta-hydroxyethyl)thiazole monophosphate (THZ-P) and 2-methyl-4-amino-5-hydroxymethyl pyrimidine pyrophosphate (HMP-PP) to form thiamine monophosphate (TMP). The polypeptide is Thiamine-phosphate synthase (Caldicellulosiruptor bescii (strain ATCC BAA-1888 / DSM 6725 / KCTC 15123 / Z-1320) (Anaerocellum thermophilum)).